The primary structure comprises 181 residues: Oligoribonuclease (181 aa).

One can recognise an Exonuclease domain in the interval 8-171; it reads LIWVDLEMTG…DDIRESIAEL (164 aa). Tyr129 is an active-site residue.

The protein belongs to the oligoribonuclease family.

It is found in the cytoplasm. In terms of biological role, 3'-to-5' exoribonuclease specific for small oligoribonucleotides. The protein is Oligoribonuclease of Aliivibrio fischeri (strain ATCC 700601 / ES114) (Vibrio fischeri).